The sequence spans 44 residues: Antifungal protein R (44 aa).

The protein belongs to the thaumatin family.

In terms of biological role, has antifungal activity. Inhibits the growth of Trichoderma viridae and Candida albicans. The protein is Antifungal protein R of Hordeum vulgare (Barley).